A 3169-amino-acid polypeptide reads, in one-letter code: MHSAGTPGLSSRRTGNSTSFQPGPPPPPRLLLLLLLLLSLVSRVPAQPAAFGRALLSPGLAGAAGVPAEEAIVLANRGLRVPFGREVWLDPLHDLVLQVQPGDRCAVSVLDNDALAQRPGRLSPKRFPCDFGPGEVRYSHLGARSPSRDRVRLQLRYDAPGGAVVLPLVLEVEVVFTQLEVVTRNLPLVVEELLGTSNALDARSLEFAFQPETEECRVGILSGLGALPRYGELLHYPQVPGGAREGGAPETLLMDCKAFQELGVRYRHTAASRSPNRDWIPMVVELRSRGAPVGSPALKREHFQVLVRIRGGAENTAPKPSFVAMMMMEVDQFVLTALTPDMLAAEDAESPSDLLIFNLTSPFQPGQGYLVSTDDRSLPLSSFTQRDLRLLKIAYQPPSEDSDQERLFELELEVVDLEGAASDPFAFMVVVKPMNTMAPVVTRNTGLILYEGQSRPLTGPAGSGPQNLVISDEDDLEAVRLEVVAGLRHGHLVILGASSGSSAPKSFTVAELAAGQVVYQHDDRDGSLSDNLVLRMVDGGGRHQVQFLFPITLVPVDDQPPVLNANTGLTLAEGETVPILPLSLSATDMDSDDSLLLFVLESPFLTTGHLLLRQTHPPHEKQELLRGLWRKEGAFYERTVTEWQQQDITEGRLFYRHSGPHSPGPVTDQFTFRVQDNHDPPNQSGLQRFVIRIHPVDRLPPELGSGCPLRMVVQESQLTPLRKKWLRYTDLDTDDRELRYTVTQPPTDTDENHLPAPLGTLVLTDNPSVVVTHFTQAQINHHKIAYRPPGQELGVATRVAQFQFQVEDRAGNVAPGTFTLYLHPVDNQPPEILNTGFTIQEKGHHILSETELHVNDVDTDVAHISFTLTQAPKHGHMRVSGQILHVGGLFHLEDIKQGRVSYAHNGDKSLTDSCSLEVSDRHHVVPITLRVNVRPVDDEVPILSHPTGTLESYLDVLENGATEITANVIKGTNEETDDLMLTFLLEDPPLYGEILVNGIPAEQFTQRDILEGSVVYTHTSGEIGLLPKADSFNLSLSDMSQEWRIGGNTIQGVTIWVTILPVDSQAPEIFVGEQLIVMEGDKSVITSVHISAEDVDSLNDDILCTIVIQPTSGYVENISPAPGSEKSRAGIAISAFNLKDLRQGHINYVQSVHKGVEPVEDRFVFRCSDGINFSERQFFPIVIIPTNDEQPEMFMREFMVMEGMSLVIDTPILNAADADVPLDDLTFTITQFPTHGHIMNQLINGTVLVESFTLDQIIESSSIIYEHDDSETQEDSFVIKLTDGKHSVEKTVLIIVIPVDDETPRMTINNGLEIEIGDTKIINNKILMATDLDSEDKSLVYIIRYGPGHGLLQRRKPTGAFENITLGMNFTQDEVDRNLIQYVHLGQEGIRDLIKFDVTDGINPLIDRYFYVSIGSIDIVFPDVISKGVSLKEGGKVTLTTDLLSTSDLNSPDENLVFTITRAPMRGHLECTDQPGVSITSFTQLQLAGNKIYYIHTADDEVKMDSFEFQVTDGRNPVFRTFRISISDVDNKKPVVTIHKLVVSESENKLITPFELTVEDRDTPDKLLKFTITQVPIHGHLLFNNTRPVMVFTKQDLNENLISYKHDGTESSEDSFSFTVTDGTHTDFYVFPDTVFETRRPQVMKIQVLAVDNSVPQIAVNKGASTLRTLATGHLGFMITSKILKVEDRDSLHISLRFIVTEAPQHGYLLNLDKGNHSITQFTQADIDDMKICYVLREGANATSDMFYFAVEDGGGNKLTYQNFRLNWAWISFEKEYYLVNEDSKFLDVVLKRRGYLGETSFISIGTRDRTAEKDKDFKGKAQKQVQFNPGQTRATWRVRILSDGEHEQSETFQVVLSEPVLAALEFPTVATVEIVDPGDEPTVFIPQSKYSVEEDVGELFIPIRRSGDVSQELMVVCYTQQGTATGTVPTSVLSYSDYISRPEDHTSVVRFDKDEREKLCRIVIIDDSLYEEEETFHVLLSMPMGGRIGSEFPGAQVTIVPDKDDEPIFYFGDVEYSVDESAGYVEVQVWRTGTDLSKSSSVTVRSRKTDPPSADAGTDYVGISRNLDFAPGVNMQPVRVVILDDLGQPALEGIEKFELVLRMPMNAALGEPSKATVSINDSVSDLPKMQFKERIYTGSESDGQIVTMIHRTGDVQYRSSVRCYTRQGSAQVMMDFEERPNTDTSIITFLPGETEKPCILELMDDVLYEEVEELRLVLGTPQSNSPFGAAVGEQNETLIRIRDDADKTVIKFGETKFSVTEPKEPGESVVIRIPVIRQGDTSKVSIVRVHTKDGSATSGEDYHPVSEEIEFKEGETQHVVEIEVTFDGVREMREAFTVHLKPDENMIAEMQLTKAIVYIEEMSSMADVTFPSVPQIVSLLMYDDTSKAKESAEPMSGYPVICITACNPKYSDYDKTGSICASENINDTLTRYRWLISAPAGPDGVTSPMREVDFDTFFTSSKMVTLDSIYFQPGSRVQCAARAVNTNGDEGLELMSPIVTISREEGLCQPRVPGVVGAEPFSAKLRYTGPEDADYTNLIKLTVTMPHIDGMLPVISTRELSNFELTLSPDGTRVGNHKCSNLLDYTEVKTHYGFLTDATKNPEIIGETYPYQYSLSIRGSTTLRFYRNLNLEACLWEFVSYYDMSELLADCGGTIGTDGQVLNLVQSYVTLRVPLYVSYVFHSPVGVGGWQHFDLKSELRLTFVYDTAILWNDGIGSPPEAELQGSLYPTSMRIGDEGRLAVHFKTEAQFHGLFVLSHPASFTSSVIMSADHPGLTFSLRLIRSEPTYNQPVQQWSFVSDFAVRDYSGTYTVKLVPCTAPSHQEYRLPVTCNPREPVTFDLDIRFQQVSDPVAAEFSLNTQMYLLSKKSLWLSDGSMGFGQESDVAFAEGDIIYGRVMVDPVQNLGDSFYCSIEKVFLCTGADGYVPKYSPMNAEYGCLADSPSLLYRFKIVDKAQPETQATSFGNVLFNAKLAVDDPEAILLVNQPGSDGFKVDSTPLFQVALGREWYIHTIYTVRSKDNANRGIGKRSVEYHSLVSQGKPQSTTKSRKKREIRSTPSLAWEIGAENSRGTNIQHIALDRTKRQIPHGRAPPDGILPWELNSPSSAVSLVTVVGGTTVGLLTICLTVIAVLMCRGKESFRGKDAPKGSSSSEPMVPPQSHHNDSSEV.

The disordered stretch occupies residues 1–24 (MHSAGTPGLSSRRTGNSTSFQPGP). The N-terminal stretch at 1–46 (MHSAGTPGLSSRRTGNSTSFQPGPPPPPRLLLLLLLLLSLVSRVPA) is a signal peptide. The span at 8–21 (GLSSRRTGNSTSFQ) shows a compositional bias: polar residues. Over 47-3113 (QPAAFGRALL…SPSSAVSLVT (3067 aa)) the chain is Extracellular. CSPG repeat units follow at residues 319–413 (KPSF…LELE), 438–537 (APVV…LRMV), 560–675 (PPVL…FRVQ), 700–807 (PPEL…FQVE), 828–919 (QPPE…LEVS), 945–1037 (HPTG…LSLS), 1066–1168 (APEI…FRCS), 1189–1282 (EQPE…IKLT), 1303–1399 (TPRM…FDVT), 1420–1512 (VFPD…FQVT), 1532–1621 (KKPV…FTVT), and 1655–1752 (VPQI…FAVE). Residue asparagine 358 is glycosylated (N-linked (GlcNAc...) asparagine). N-linked (GlcNAc...) asparagine glycosylation is found at asparagine 1244 and asparagine 1369. N-linked (GlcNAc...) asparagine glycans are attached at residues asparagine 1584 and asparagine 1741. Calx-beta domains are found at residues 1759–1858 (LTYQ…VVLS), 1871–1982 (ATVE…VLLS), 1997–2103 (QVTI…LVLR), 2118–2220 (VSIN…LVLG), and 2238–2342 (TLIR…VHLK). The tract at residues 3036–3057 (SLVSQGKPQSTTKSRKKREIRS) is disordered. The span at 3037–3047 (LVSQGKPQSTT) shows a compositional bias: polar residues. Residues 3114-3134 (VVGGTTVGLLTICLTVIAVLM) form a helical membrane-spanning segment. Over 3135–3169 (CRGKESFRGKDAPKGSSSSEPMVPPQSHHNDSSEV) the chain is Cytoplasmic. The segment at 3141 to 3169 (FRGKDAPKGSSSSEPMVPPQSHHNDSSEV) is disordered.

It belongs to the FRAS1 family. In terms of assembly, interacts with FREM1.

It is found in the cell membrane. In terms of biological role, extracellular matrix protein required for maintenance of the integrity of the skin epithelium and for maintenance of renal epithelia. Required for epidermal adhesion. Involved in the development of eyelids and the anterior segment of the eyeballs. The polypeptide is FRAS1-related extracellular matrix protein 2 (FREM2) (Homo sapiens (Human)).